The primary structure comprises 360 residues: Phospho-N-acetylmuramoyl-pentapeptide-transferase (360 aa).

10 helical membrane-spanning segments follow: residues 27 to 47 (ILGV…VIVL), 73 to 93 (TMGG…WGDL), 97 to 117 (YVWV…VDDY), 145 to 165 (AFYL…VPLF), 168 to 188 (VAIP…VGTS), 199 to 219 (GLAI…AYLT), 236 to 256 (SGEL…FLWF), 263 to 283 (IFMG…IAVI), 288 to 308 (LVLF…ILQV), and 337 to 357 (KVIV…FATL).

This sequence belongs to the glycosyltransferase 4 family. MraY subfamily. It depends on Mg(2+) as a cofactor.

The protein resides in the cell inner membrane. The catalysed reaction is UDP-N-acetyl-alpha-D-muramoyl-L-alanyl-gamma-D-glutamyl-meso-2,6-diaminopimeloyl-D-alanyl-D-alanine + di-trans,octa-cis-undecaprenyl phosphate = di-trans,octa-cis-undecaprenyl diphospho-N-acetyl-alpha-D-muramoyl-L-alanyl-D-glutamyl-meso-2,6-diaminopimeloyl-D-alanyl-D-alanine + UMP. Its pathway is cell wall biogenesis; peptidoglycan biosynthesis. In terms of biological role, catalyzes the initial step of the lipid cycle reactions in the biosynthesis of the cell wall peptidoglycan: transfers peptidoglycan precursor phospho-MurNAc-pentapeptide from UDP-MurNAc-pentapeptide onto the lipid carrier undecaprenyl phosphate, yielding undecaprenyl-pyrophosphoryl-MurNAc-pentapeptide, known as lipid I. This chain is Phospho-N-acetylmuramoyl-pentapeptide-transferase, found in Marinomonas sp. (strain MWYL1).